We begin with the raw amino-acid sequence, 207 residues long: Claudin-11 (207 aa).

Methionine 1 is a topological domain (cytoplasmic). The helical transmembrane segment at 2–22 (VATCLQVVGFVTSFVGWIGII) threads the bilayer. Residues 23–82 (VTTSTNDWVVTCSYTIPTCRKMDELGSKGLWADCVMATGLHHCKPLVDILILPGYAQACR) lie on the Extracellular side of the membrane. Residues 83 to 103 (ALMIAASVLGLPGILLLLTVL) form a helical membrane-spanning segment. The Cytoplasmic portion of the chain corresponds to 104–122 (PCIRMGHEPGVAKYRRAQL). Residues 123-143 (AGVLLILLALCAIVATIWFPV) form a helical membrane-spanning segment. Residues 144 to 157 (CAHREITIVSFGYS) lie on the Extracellular side of the membrane. Residues 158 to 178 (LYAGWIGAVMCLVGGCVIVCC) traverse the membrane as a helical segment. Residues 179 to 207 (SGDAQSFGENRFYYSSGSSSPTHAKSAHV) lie on the Cytoplasmic side of the membrane. Residues serine 193, serine 194, serine 197, and serine 198 each carry the phosphoserine modification.

It belongs to the claudin family. In terms of assembly, interacts with tetraspanin-3/TSPAN3. Interacts with OCLN.

The protein localises to the cell junction. The protein resides in the tight junction. Its subcellular location is the cell membrane. Functionally, plays a major role in tight junction-specific obliteration of the intercellular space, through calcium-independent cell-adhesion activity. The protein is Claudin-11 (Cldn11) of Rattus norvegicus (Rat).